Consider the following 320-residue polypeptide: tRNA uridine(34) hydroxylase (320 aa).

The Rhodanese domain maps to 123 to 217; that stretch reads EDENTVILDA…YGKDPETKGL (95 aa). The Cysteine persulfide intermediate role is filled by C177.

It belongs to the TrhO family.

It catalyses the reaction uridine(34) in tRNA + AH2 + O2 = 5-hydroxyuridine(34) in tRNA + A + H2O. In terms of biological role, catalyzes oxygen-dependent 5-hydroxyuridine (ho5U) modification at position 34 in tRNAs. This Staphylococcus epidermidis (strain ATCC 35984 / DSM 28319 / BCRC 17069 / CCUG 31568 / BM 3577 / RP62A) protein is tRNA uridine(34) hydroxylase.